The chain runs to 73 residues: Sec-independent protein translocase protein TatA (73 aa).

Residues 1–21 (MGSFSIGHWLIVLAIIVLLFG) traverse the membrane as a helical segment. Residues 43–73 (MEDTTPEKSEKVEHKEESATSQKIEETTKNA) form a disordered region.

The protein belongs to the TatA/E family. In terms of assembly, the Tat system comprises two distinct complexes: a TatABC complex, containing multiple copies of TatA, TatB and TatC subunits, and a separate TatA complex, containing only TatA subunits. Substrates initially bind to the TatABC complex, which probably triggers association of the separate TatA complex to form the active translocon.

It localises to the cell inner membrane. Its function is as follows. Part of the twin-arginine translocation (Tat) system that transports large folded proteins containing a characteristic twin-arginine motif in their signal peptide across membranes. TatA could form the protein-conducting channel of the Tat system. The polypeptide is Sec-independent protein translocase protein TatA (Campylobacter concisus (strain 13826)).